Reading from the N-terminus, the 491-residue chain is Protein nucleotidyltransferase YdiU (491 aa).

Glycine 94, glycine 96, arginine 97, lysine 117, aspartate 129, glycine 130, arginine 180, and arginine 187 together coordinate ATP. Aspartate 256 (proton acceptor) is an active-site residue. Mg(2+) contacts are provided by asparagine 257 and aspartate 266. ATP is bound at residue aspartate 266.

It belongs to the SELO family. Requires Mg(2+) as cofactor. Mn(2+) is required as a cofactor.

The enzyme catalyses L-seryl-[protein] + ATP = 3-O-(5'-adenylyl)-L-seryl-[protein] + diphosphate. It carries out the reaction L-threonyl-[protein] + ATP = 3-O-(5'-adenylyl)-L-threonyl-[protein] + diphosphate. It catalyses the reaction L-tyrosyl-[protein] + ATP = O-(5'-adenylyl)-L-tyrosyl-[protein] + diphosphate. The catalysed reaction is L-histidyl-[protein] + UTP = N(tele)-(5'-uridylyl)-L-histidyl-[protein] + diphosphate. The enzyme catalyses L-seryl-[protein] + UTP = O-(5'-uridylyl)-L-seryl-[protein] + diphosphate. It carries out the reaction L-tyrosyl-[protein] + UTP = O-(5'-uridylyl)-L-tyrosyl-[protein] + diphosphate. Functionally, nucleotidyltransferase involved in the post-translational modification of proteins. It can catalyze the addition of adenosine monophosphate (AMP) or uridine monophosphate (UMP) to a protein, resulting in modifications known as AMPylation and UMPylation. In Clostridium botulinum (strain Okra / Type B1), this protein is Protein nucleotidyltransferase YdiU.